Reading from the N-terminus, the 1324-residue chain is Tetratricopeptide repeat protein 21 homolog (1324 aa).

16 TPR repeats span residues Pro-58 to Ala-91, Ser-414 to Met-446, Ser-582 to Glu-615, Asp-669 to Phe-702, Pro-737 to Asp-770, Gln-772 to Lys-804, Met-806 to Pro-837, Ile-847 to Ile-880, Ala-894 to Asp-927, Lys-929 to Asn-961, Glu-963 to His-995, His-997 to Cys-1029, Ser-1033 to Trp-1066, Glu-1205 to Cys-1238, Lys-1240 to Arg-1272, and Pro-1274 to Tyr-1307.

This sequence belongs to the TTC21 family. As to quaternary structure, component of the IFT complex A (IFT-A) composed of at least che-11, daf-10, dyf-2, ift-139, ift-43 and ifta-1. Expressed in ciliated sensory neurons in the head and tail.

Its subcellular location is the cell projection. The protein resides in the cilium. It is found in the cytoplasm. It localises to the cytoskeleton. The protein localises to the cilium basal body. Its subcellular location is the dendrite. Functionally, component of the IFT complex A (IFT-A), a complex required for retrograde ciliary transport. In particular, may act redundantly with the intraflagellar transport protein ift-43 to regulate the transport of specific ciliary cargo proteins such as che-3 which are related to motility. Functions in cilia biogenesis. The chain is Tetratricopeptide repeat protein 21 homolog from Caenorhabditis elegans.